The primary structure comprises 588 residues: Schlafen family member 12-like (588 aa).

A helical transmembrane segment spans residues 566–586 (IFLFVCLFRFCLFVCWFVCFF).

This sequence belongs to the Schlafen family.

The protein localises to the membrane. This Homo sapiens (Human) protein is Schlafen family member 12-like (SLFN12L).